Here is a 457-residue protein sequence, read N- to C-terminus: Siroheme synthase (457 aa).

The segment at 1-204 is precorrin-2 dehydrogenase /sirohydrochlorin ferrochelatase; sequence MDHLPIFCQL…NDQKAITETT (204 aa). Residues 22-23 and 43-44 contribute to the NAD(+) site; these read DV and LA. Residue serine 128 is modified to Phosphoserine. Residues 216-457 are uroporphyrinogen-III C-methyltransferase; the sequence is GEVVLVGAGP…RDKLNWFSNH (242 aa). Proline 225 serves as a coordination point for S-adenosyl-L-methionine. Aspartate 248 functions as the Proton acceptor in the catalytic mechanism. The active-site Proton donor is lysine 270. S-adenosyl-L-methionine-binding positions include 301 to 303, isoleucine 306, 331 to 332, methionine 382, and glycine 411; these read GGD and TA.

In the N-terminal section; belongs to the precorrin-2 dehydrogenase / sirohydrochlorin ferrochelatase family. It in the C-terminal section; belongs to the precorrin methyltransferase family.

The enzyme catalyses uroporphyrinogen III + 2 S-adenosyl-L-methionine = precorrin-2 + 2 S-adenosyl-L-homocysteine + H(+). It catalyses the reaction precorrin-2 + NAD(+) = sirohydrochlorin + NADH + 2 H(+). It carries out the reaction siroheme + 2 H(+) = sirohydrochlorin + Fe(2+). The protein operates within cofactor biosynthesis; adenosylcobalamin biosynthesis; precorrin-2 from uroporphyrinogen III: step 1/1. It functions in the pathway cofactor biosynthesis; adenosylcobalamin biosynthesis; sirohydrochlorin from precorrin-2: step 1/1. Its pathway is porphyrin-containing compound metabolism; siroheme biosynthesis; precorrin-2 from uroporphyrinogen III: step 1/1. It participates in porphyrin-containing compound metabolism; siroheme biosynthesis; siroheme from sirohydrochlorin: step 1/1. The protein operates within porphyrin-containing compound metabolism; siroheme biosynthesis; sirohydrochlorin from precorrin-2: step 1/1. Multifunctional enzyme that catalyzes the SAM-dependent methylations of uroporphyrinogen III at position C-2 and C-7 to form precorrin-2 via precorrin-1. Then it catalyzes the NAD-dependent ring dehydrogenation of precorrin-2 to yield sirohydrochlorin. Finally, it catalyzes the ferrochelation of sirohydrochlorin to yield siroheme. In Escherichia fergusonii (strain ATCC 35469 / DSM 13698 / CCUG 18766 / IAM 14443 / JCM 21226 / LMG 7866 / NBRC 102419 / NCTC 12128 / CDC 0568-73), this protein is Siroheme synthase.